The sequence spans 135 residues: Lactoylglutathione lyase (135 aa).

The 125-residue stretch at Arg-2 to Ala-126 folds into the VOC domain. His-5 serves as a coordination point for Ni(2+). Position 9 (Arg-9) interacts with substrate. Glu-56 lines the Ni(2+) pocket. Substrate contacts are provided by Asn-60 and His-74. Positions 74 and 122 each coordinate Ni(2+). Residue Glu-122 is the Proton donor/acceptor of the active site.

It belongs to the glyoxalase I family. Homodimer. The cofactor is Ni(2+).

The catalysed reaction is (R)-S-lactoylglutathione = methylglyoxal + glutathione. Its pathway is secondary metabolite metabolism; methylglyoxal degradation; (R)-lactate from methylglyoxal: step 1/2. Its function is as follows. Catalyzes the conversion of hemimercaptal, formed from methylglyoxal and glutathione, to S-lactoylglutathione. The polypeptide is Lactoylglutathione lyase (gloA) (Salmonella typhi).